The following is a 114-amino-acid chain: Dolichyl-diphosphooligosaccharide--protein glycosyltransferase subunit DAD1 (114 aa).

Residues 1–30 (MPKAAGDAKLLIQSLNKAYAATPTNLKIID) lie on the Cytoplasmic side of the membrane. A helical transmembrane segment spans residues 31–51 (LYVVFAVVTALLQVVYMGIVG). Ser-52 is a topological domain (lumenal). A helical membrane pass occupies residues 53–73 (FPFNSFLSGVLSCIGTAVLAV). The Cytoplasmic portion of the chain corresponds to 74-93 (CHRIQVNKDNKEFKDLAPER). The helical transmembrane segment at 94–114 (AFADFVLCSLVLHLVIMNFLG) threads the bilayer.

Belongs to the DAD/OST2 family. In terms of assembly, component of the oligosaccharyltransferase (OST) complex.

Its subcellular location is the endoplasmic reticulum membrane. It participates in protein modification; protein glycosylation. In terms of biological role, subunit of the oligosaccharyl transferase (OST) complex that catalyzes the initial transfer of a defined glycan (Glc(3)Man(9)GlcNAc(2) in eukaryotes) from the lipid carrier dolichol-pyrophosphate to an asparagine residue within an Asn-X-Ser/Thr consensus motif in nascent polypeptide chains, the first step in protein N-glycosylation. N-glycosylation occurs cotranslationally and the complex associates with the Sec61 complex at the channel-forming translocon complex that mediates protein translocation across the endoplasmic reticulum (ER). All subunits are required for a maximal enzyme activity. The chain is Dolichyl-diphosphooligosaccharide--protein glycosyltransferase subunit DAD1 (DAD1) from Hordeum vulgare (Barley).